Consider the following 186-residue polypeptide: Allergen Fel d 4 (186 aa).

A signal peptide spans 1–15 (MKLLLLCLGLILVCA). N-linked (GlcNAc...) asparagine glycosylation is found at Asn-51 and Asn-66. Cys-81 and Cys-171 are joined by a disulfide.

The protein belongs to the calycin superfamily. Lipocalin family. As to expression, abundant in urine (at protein level).

The protein localises to the secreted. In terms of biological role, may be a pheromone carrier. Acts as a kairomone, detected by the prey vomeronasal organ and inducing fear reactions in mice. The polypeptide is Allergen Fel d 4 (Felis catus (Cat)).